Consider the following 495-residue polypeptide: Trigger factor (495 aa).

The region spanning 169-254 (GDRVTIDYLG…VKEVAAPGEV (86 aa)) is the PPIase FKBP-type domain. The segment at 439–495 (ALLADDESEDKPAAKKAAPKKKAAKAEATEAAAEGEEAAVPKKKAAPKKKAAEDSAE) is disordered.

Belongs to the FKBP-type PPIase family. Tig subfamily.

The protein localises to the cytoplasm. The catalysed reaction is [protein]-peptidylproline (omega=180) = [protein]-peptidylproline (omega=0). Involved in protein export. Acts as a chaperone by maintaining the newly synthesized protein in an open conformation. Functions as a peptidyl-prolyl cis-trans isomerase. The polypeptide is Trigger factor (Rhizobium rhizogenes (strain K84 / ATCC BAA-868) (Agrobacterium radiobacter)).